The primary structure comprises 308 residues: Oxygen-dependent coproporphyrinogen-III oxidase (308 aa).

S100 serves as a coordination point for substrate. A divalent metal cation-binding residues include H104 and H114. H114 functions as the Proton donor in the catalytic mechanism. 116 to 118 (NFR) serves as a coordination point for substrate. H153 and H183 together coordinate a divalent metal cation. The segment at 248 to 283 (YVEFNLVFDRGTIFGLQSGGRTESILSSMPPMATWK) is important for dimerization. 266–268 (GGR) contacts substrate.

Belongs to the aerobic coproporphyrinogen-III oxidase family. As to quaternary structure, homodimer. A divalent metal cation is required as a cofactor.

It is found in the cytoplasm. It catalyses the reaction coproporphyrinogen III + O2 + 2 H(+) = protoporphyrinogen IX + 2 CO2 + 2 H2O. Its pathway is porphyrin-containing compound metabolism; protoporphyrin-IX biosynthesis; protoporphyrinogen-IX from coproporphyrinogen-III (O2 route): step 1/1. Functionally, involved in the heme biosynthesis. Catalyzes the aerobic oxidative decarboxylation of propionate groups of rings A and B of coproporphyrinogen-III to yield the vinyl groups in protoporphyrinogen-IX. This is Oxygen-dependent coproporphyrinogen-III oxidase from Francisella tularensis subsp. mediasiatica (strain FSC147).